Here is a 381-residue protein sequence, read N- to C-terminus: Queuine tRNA-ribosyltransferase (381 aa).

Catalysis depends on Asp-103, which acts as the Proton acceptor. Substrate is bound by residues 103-107 (DSGGF), Asp-157, Gln-200, and Gly-227. Residues 258 to 264 (GVGTYRE) are RNA binding. Residue Asp-277 is the Nucleophile of the active site. The tract at residues 282-286 (TRLAR) is RNA binding; important for wobble base 34 recognition. Zn(2+)-binding residues include Cys-315, Cys-317, Cys-320, and His-346.

It belongs to the queuine tRNA-ribosyltransferase family. As to quaternary structure, homodimer. Within each dimer, one monomer is responsible for RNA recognition and catalysis, while the other monomer binds to the replacement base PreQ1. It depends on Zn(2+) as a cofactor.

It catalyses the reaction 7-aminomethyl-7-carbaguanine + guanosine(34) in tRNA = 7-aminomethyl-7-carbaguanosine(34) in tRNA + guanine. It functions in the pathway tRNA modification; tRNA-queuosine biosynthesis. Its function is as follows. Catalyzes the base-exchange of a guanine (G) residue with the queuine precursor 7-aminomethyl-7-deazaguanine (PreQ1) at position 34 (anticodon wobble position) in tRNAs with GU(N) anticodons (tRNA-Asp, -Asn, -His and -Tyr). Catalysis occurs through a double-displacement mechanism. The nucleophile active site attacks the C1' of nucleotide 34 to detach the guanine base from the RNA, forming a covalent enzyme-RNA intermediate. The proton acceptor active site deprotonates the incoming PreQ1, allowing a nucleophilic attack on the C1' of the ribose to form the product. After dissociation, two additional enzymatic reactions on the tRNA convert PreQ1 to queuine (Q), resulting in the hypermodified nucleoside queuosine (7-(((4,5-cis-dihydroxy-2-cyclopenten-1-yl)amino)methyl)-7-deazaguanosine). This is Queuine tRNA-ribosyltransferase from Cyanothece sp. (strain PCC 7425 / ATCC 29141).